The following is a 218-amino-acid chain: Small ribosomal subunit protein uS3c (218 aa).

Residues 47 to 118 (VQKNMKTSSG…KLNIAITRIE (72 aa)) form the KH type-2 domain.

The protein belongs to the universal ribosomal protein uS3 family. Part of the 30S ribosomal subunit.

It localises to the plastid. Its subcellular location is the chloroplast. The sequence is that of Small ribosomal subunit protein uS3c (rps3) from Lactuca sativa (Garden lettuce).